The sequence spans 565 residues: Periplasmic trehalase (565 aa).

The signal sequence occupies residues 1–30 (MKSPAPSRPQKMALIPACIFLCFAALSVQA). Residues Arg-152, 159–160 (WD), Asn-196, 205–207 (RSQ), 277–279 (RPE), and Gly-310 each bind substrate. Residues Asp-312 and Glu-496 each act as proton donor/acceptor in the active site. Substrate is bound at residue Glu-511. The tract at residues 539 to 565 (CDNVPATRPLSESTTQPVKQKEAEPTP) is disordered.

It belongs to the glycosyl hydrolase 37 family. Monomer.

Its subcellular location is the periplasm. The enzyme catalyses alpha,alpha-trehalose + H2O = alpha-D-glucose + beta-D-glucose. Provides the cells with the ability to utilize trehalose at high osmolarity by splitting it into glucose molecules that can subsequently be taken up by the phosphotransferase-mediated uptake system. This is Periplasmic trehalase from Escherichia coli O6:H1 (strain CFT073 / ATCC 700928 / UPEC).